A 250-amino-acid chain; its full sequence is Probable transcriptional regulatory protein SACE_2018 (250 aa).

Belongs to the TACO1 family.

It localises to the cytoplasm. The chain is Probable transcriptional regulatory protein SACE_2018 from Saccharopolyspora erythraea (strain ATCC 11635 / DSM 40517 / JCM 4748 / NBRC 13426 / NCIMB 8594 / NRRL 2338).